Consider the following 313-residue polypeptide: HPr kinase/phosphorylase (313 aa).

Active-site residues include His-140 and Lys-161. An ATP-binding site is contributed by 155–162; sequence GNSGAGKS. Ser-162 is a Mg(2+) binding site. Asp-179 serves as the catalytic Proton acceptor; for phosphorylation activity. Proton donor; for dephosphorylation activity. Positions 203-212 are important for the catalytic mechanism of both phosphorylation and dephosphorylation; that stretch reads IEVRGLGILN. Glu-204 lines the Mg(2+) pocket. Arg-246 is an active-site residue. An important for the catalytic mechanism of dephosphorylation region spans residues 267 to 272; that stretch reads PVAAGR.

It belongs to the HPrK/P family. As to quaternary structure, homohexamer. Mg(2+) is required as a cofactor.

It catalyses the reaction [HPr protein]-L-serine + ATP = [HPr protein]-O-phospho-L-serine + ADP + H(+). It carries out the reaction [HPr protein]-O-phospho-L-serine + phosphate + H(+) = [HPr protein]-L-serine + diphosphate. In terms of biological role, catalyzes the ATP- as well as the pyrophosphate-dependent phosphorylation of a specific serine residue in HPr, a phosphocarrier protein of the phosphoenolpyruvate-dependent sugar phosphotransferase system (PTS). HprK/P also catalyzes the pyrophosphate-producing, inorganic phosphate-dependent dephosphorylation (phosphorolysis) of seryl-phosphorylated HPr (P-Ser-HPr). The protein is HPr kinase/phosphorylase of Aromatoleum aromaticum (strain DSM 19018 / LMG 30748 / EbN1) (Azoarcus sp. (strain EbN1)).